The primary structure comprises 737 residues: Ribosome-releasing factor 2, mitochondrial (737 aa).

A mitochondrion-targeting transit peptide spans 1-36 (MLCNRLHKAAFAARLRPRLPATVASCRQVHNSDGTI). A tr-type G domain is found at 39-318 (KRIRNIGILA…SVLNFLPAPS (280 aa)). Residues 48 to 55 (AHIDAGKT), 112 to 116 (DTPGH), and 166 to 169 (NKMD) contribute to the GTP site.

The protein belongs to the TRAFAC class translation factor GTPase superfamily. Classic translation factor GTPase family. EF-G/EF-2 subfamily.

It localises to the mitochondrion. Its function is as follows. Mitochondrial GTPase that mediates the disassembly of ribosomes from messenger RNA at the termination of mitochondrial protein biosynthesis. Not involved in the GTP-dependent ribosomal translocation step during translation elongation. This is Ribosome-releasing factor 2, mitochondrial from Anopheles gambiae (African malaria mosquito).